The primary structure comprises 131 residues: Rhodopsin (131 aa).

The Extracellular segment spans residues C1–S16. N14 carries an N-linked (GlcNAc...) asparagine glycan. Residues F17–G38 traverse the membrane as a helical segment. Over N39–R66 the chain is Cytoplasmic. Residues M67–Y88 form a helical membrane-spanning segment. Over I89 to V100 the chain is Extracellular. A helical membrane pass occupies residues F101–L122. N6-(retinylidene)lysine is present on K110. Over M123–M131 the chain is Cytoplasmic.

It belongs to the G-protein coupled receptor 1 family. Opsin subfamily. In terms of processing, phosphorylated on some or all of the serine and threonine residues present in the C-terminal region. Contains one covalently linked retinal chromophore.

The protein resides in the membrane. Its subcellular location is the cell projection. The protein localises to the cilium. It localises to the photoreceptor outer segment. Its function is as follows. Photoreceptor required for image-forming vision at low light intensity. While most salt water fish species use retinal as chromophore, most freshwater fish use 3-dehydroretinal, or a mixture of retinal and 3-dehydroretinal. Light-induced isomerization of 11-cis to all-trans retinal triggers a conformational change that activates signaling via G-proteins. Subsequent receptor phosphorylation mediates displacement of the bound G-protein alpha subunit by arrestin and terminates signaling. This is Rhodopsin (rho) from Coregonus autumnalis (Arctic cisco).